A 141-amino-acid polypeptide reads, in one-letter code: Large ribosomal subunit protein uL11B (141 aa).

Belongs to the universal ribosomal protein uL11 family. In terms of assembly, part of the ribosomal stalk of the 50S ribosomal subunit. Interacts with L10 and the large rRNA to form the base of the stalk. L10 forms an elongated spine to which L12 dimers bind in a sequential fashion forming a multimeric L10(L12)X complex. Post-translationally, one or more lysine residues are methylated.

In terms of biological role, forms part of the ribosomal stalk which helps the ribosome interact with GTP-bound translation factors. This is Large ribosomal subunit protein uL11B from Halalkalibacterium halodurans (strain ATCC BAA-125 / DSM 18197 / FERM 7344 / JCM 9153 / C-125) (Bacillus halodurans).